We begin with the raw amino-acid sequence, 119 residues long: Large ribosomal subunit protein bL12 (119 aa).

The protein belongs to the bacterial ribosomal protein bL12 family. In terms of assembly, homodimer. Part of the ribosomal stalk of the 50S ribosomal subunit. Forms a multimeric L10(L12)X complex, where L10 forms an elongated spine to which 2 to 4 L12 dimers bind in a sequential fashion. Binds GTP-bound translation factors.

Its function is as follows. Forms part of the ribosomal stalk which helps the ribosome interact with GTP-bound translation factors. Is thus essential for accurate translation. The protein is Large ribosomal subunit protein bL12 of Bacillus anthracis (strain A0248).